A 238-amino-acid chain; its full sequence is Major prion protein (238 aa).

An N-terminal signal peptide occupies residues methionine 1–cysteine 15. The interaction with GRB2, ERI3 and SYN1 stretch occupies residues lysine 16–serine 215. Residues arginine 18–serine 93 are disordered. 4 consecutive repeat copies span residues proline 44 to glutamine 52, proline 53 to glutamine 60, proline 61 to glutamine 68, and proline 69 to glutamine 76. The segment at proline 44–glutamine 76 is 4 X 8 AA tandem repeats of P-H-G-G-G-W-G-Q. A compositionally biased stretch (gly residues) spans glutamine 45 to threonine 80. 11 residues coordinate Cu(2+): glycine 47, glycine 48, histidine 54, glycine 55, glycine 56, histidine 62, glycine 63, glycine 64, histidine 70, glycine 71, and glycine 72. Positions glutamine 83–serine 93 are enriched in basic residues. Cysteines 164 and 199 form a disulfide. Asparagine 166 and asparagine 182 each carry an N-linked (GlcNAc...) asparagine glycan. Residue serine 215 is the site of GPI-anchor amidated serine attachment. The propeptide at serine 216–glycine 238 is removed in mature form.

Belongs to the prion family. Monomer and homodimer. Has a tendency to aggregate into amyloid fibrils containing a cross-beta spine, formed by a steric zipper of superposed beta-strands. Soluble oligomers may represent an intermediate stage on the path to fibril formation. Copper binding may promote oligomerization. Interacts with GRB2, APP, ERI3/PRNPIP and SYN1. Mislocalized cytosolically exposed PrP interacts with MGRN1; this interaction alters MGRN1 subcellular location and causes lysosomal enlargement. Interacts with KIAA1191.

The protein resides in the cell membrane. The protein localises to the golgi apparatus. Its function is as follows. Its primary physiological function is unclear. Has cytoprotective activity against internal or environmental stresses. May play a role in neuronal development and synaptic plasticity. May be required for neuronal myelin sheath maintenance. May play a role in iron uptake and iron homeostasis. Soluble oligomers are toxic to cultured neuroblastoma cells and induce apoptosis (in vitro). Association with GPC1 (via its heparan sulfate chains) targets PRNP to lipid rafts. Also provides Cu(2+) or Zn(2+) for the ascorbate-mediated GPC1 deaminase degradation of its heparan sulfate side chains. In Macaca sylvanus (Barbary macaque), this protein is Major prion protein (PRNP).